The sequence spans 368 residues: tRNA(Met) cytidine acetate ligase (368 aa).

Residues 7–20 (IAEF…HKYL), glycine 96, asparagine 152, and arginine 175 each bind ATP.

The protein belongs to the TmcAL family.

It localises to the cytoplasm. It catalyses the reaction cytidine(34) in elongator tRNA(Met) + acetate + ATP = N(4)-acetylcytidine(34) in elongator tRNA(Met) + AMP + diphosphate. Functionally, catalyzes the formation of N(4)-acetylcytidine (ac(4)C) at the wobble position of elongator tRNA(Met), using acetate and ATP as substrates. First activates an acetate ion to form acetyladenylate (Ac-AMP) and then transfers the acetyl group to tRNA to form ac(4)C34. The chain is tRNA(Met) cytidine acetate ligase from Streptococcus pyogenes serotype M1.